An 840-amino-acid chain; its full sequence is Phosphatidylglycerol lysyltransferase (840 aa).

Residues 1–8 (MNQEVKNK) are Cytoplasmic-facing. A helical transmembrane segment spans residues 9–29 (IFSILKITFATALFIFVAITL). The Extracellular segment spans residues 30–52 (YRELSGINFKDTLVEFSKINRMS). Residues 53–73 (LVLLFIGGGASLVILSMYDVI) traverse the membrane as a helical segment. At 74-89 (LSRALKMDISLGKVLR) the chain is on the cytoplasmic side. A helical membrane pass occupies residues 90 to 110 (VSYIINALNAIVGFGGFIGAG). At 111-128 (VRAMVYKNYTHDKKKLVH) the chain is on the extracellular side. A helical membrane pass occupies residues 129–149 (FISLILISMLTGLSLLSLLIV). At 150–161 (FHVFDASLILDK) the chain is on the cytoplasmic side. Residues 162-182 (ITWVRWVLYVVSFFLPLFIIY) form a helical membrane-spanning segment. Residues 183–200 (SMVRPPDKNNRFVGLYCT) are Extracellular-facing. The chain crosses the membrane as a helical span at residues 201–221 (LVSCVEWLAAAVVLYFCGVIV). The Cytoplasmic portion of the chain corresponds to 222-229 (DAHVSFMS). A helical membrane pass occupies residues 230 to 250 (FIAIFIIAALSGLVSFIPGGF). The Extracellular segment spans residues 251 to 271 (GAFDLVVLLGFKTLGVPEEKV). Residues 272–292 (LLMLLLYRFAYYFVPVIIALI) traverse the membrane as a helical segment. At 293 to 337 (LSSFEFGTSAKKYIEGSKYFIPAKDVTSFLMSYQKDIIAKIPSLS) the chain is on the cytoplasmic side. Residues 338-358 (LAILVFFTSMIFFVNNLTIVY) traverse the membrane as a helical segment. At 359–369 (DALYDGNHLTY) the chain is on the extracellular side. The chain crosses the membrane as a helical span at residues 370–390 (YILLAIHTSACLLLLLNVVGI). The Cytoplasmic segment spans residues 391 to 394 (YKQS). Transmembrane regions (helical) follow at residues 395–415 (RRAIIFAMISILLITVATFFT) and 416–436 (YASYILITWLAIIFVLLIVAF). Over 437 to 450 (RRARRLKRPVRMRN) the chain is Cytoplasmic. The helical transmembrane segment at 451–471 (IVAMLLFSLFILYVNHIFIAG) threads the bilayer. Residues 472-489 (TLYALDIYTIEMHTSVLR) lie on the Extracellular side of the membrane. Residues 490 to 510 (YYFWLTILIIAIIIGMIAWLF) form a helical membrane-spanning segment. The Cytoplasmic segment spans residues 511-840 (DYQFSKVRIS…SKVMRVIRHK (330 aa)).

The protein belongs to the LPG synthase family.

The protein resides in the cell membrane. The catalysed reaction is L-lysyl-tRNA(Lys) + a 1,2-diacyl-sn-glycero-3-phospho-(1'-sn-glycerol) = a 1,2-diacyl-sn-glycero-3-phospho-1'-(3'-O-L-lysyl)-sn-glycerol + tRNA(Lys). In terms of biological role, catalyzes the transfer of a lysyl group from L-lysyl-tRNA(Lys) to membrane-bound phosphatidylglycerol (PG), which produces lysylphosphatidylglycerol (LPG), a major component of the bacterial membrane with a positive net charge. LPG synthesis contributes to bacterial virulence as it is involved in the resistance mechanism against cationic antimicrobial peptides (CAMP) produces by the host's immune system (defensins, cathelicidins) and by the competing microorganisms (bacteriocins). In fact, the modification of anionic phosphatidylglycerol with positively charged L-lysine results in repulsion of the peptides. This chain is Phosphatidylglycerol lysyltransferase (mprF), found in Staphylococcus aureus (strain Mu50 / ATCC 700699).